Consider the following 200-residue polypeptide: CASP-like protein 1D2 (200 aa).

The tract at residues 1-26 is disordered; sequence MASTENPDPETGKSEPIPASATTPPP. The Cytoplasmic segment spans residues 1 to 36; sequence MASTENPDPETGKSEPIPASATTPPPSAASFLDCRK. A helical transmembrane segment spans residues 37 to 57; that stretch reads IDVIIRVLLFSATLTALIVMV. Over 58 to 85 the chain is Extracellular; that stretch reads TSDQTEKTQLPGVSSPAPVSAEFNDSPA. A helical transmembrane segment spans residues 86 to 106; it reads FIFFVVALVVTSFYALMSTLV. The Cytoplasmic segment spans residues 107–129; sequence SISLLLKPEFTARVSVYLASLDM. Residues 130 to 150 form a helical membrane-spanning segment; it reads VMLGILASATGTAGGVAYIAL. At 151-171 the chain is on the extracellular side; it reads KGNKEVGWNKICNVYDKFCRY. A helical transmembrane segment spans residues 172-192; it reads IATSLALSLFATLLLLVLSIC. Topologically, residues 193 to 200 are cytoplasmic; the sequence is SALSKRTP.

It belongs to the Casparian strip membrane proteins (CASP) family. In terms of assembly, homodimer and heterodimers.

The protein resides in the cell membrane. In Arabidopsis lyrata subsp. lyrata (Lyre-leaved rock-cress), this protein is CASP-like protein 1D2.